The primary structure comprises 639 residues: DNA primase (639 aa).

The CHC2-type zinc-finger motif lies at 41-65 (CPFHNEKSPSFHVRPNHGHFHCFGC). One can recognise a Toprim domain in the interval 262-348 (HQAVVVEGYT…AGQSFVAVAP (87 aa)). Glutamate 268, aspartate 319, and aspartate 321 together coordinate Mg(2+). The disordered stretch occupies residues 460 to 479 (RAAQRPTAGPPTELAVRPDP).

Belongs to the DnaG primase family. As to quaternary structure, monomer. Interacts with DnaB. It depends on Zn(2+) as a cofactor. The cofactor is Mg(2+).

It catalyses the reaction ssDNA + n NTP = ssDNA/pppN(pN)n-1 hybrid + (n-1) diphosphate.. Its function is as follows. RNA polymerase that catalyzes the synthesis of short RNA molecules used as primers for DNA polymerase during DNA replication. The protein is DNA primase of Mycobacterium bovis (strain ATCC BAA-935 / AF2122/97).